A 282-amino-acid chain; its full sequence is Purine nucleoside phosphorylase (282 aa).

Residues Ser46, His78, and 103 to 105 contribute to the phosphate site; that span reads RTH. Residue Glu204 is part of the active site. An a purine D-ribonucleoside-binding site is contributed by Glu204. Ser223 provides a ligand contact to phosphate. Asn246 lines the a purine D-ribonucleoside pocket.

It belongs to the PNP/MTAP phosphorylase family. Homotrimer.

The catalysed reaction is a purine 2'-deoxy-D-ribonucleoside + phosphate = a purine nucleobase + 2-deoxy-alpha-D-ribose 1-phosphate. The protein operates within purine metabolism; purine nucleoside salvage. Its function is as follows. The purine nucleoside phosphorylases catalyze the phosphorolytic breakdown of the N-glycosidic bond in the beta-(deoxy)ribonucleoside molecules, with the formation of the corresponding free purine bases and pentose-1-phosphate. Cleaves guanosine, inosine, 2'-deoxyguanosine and 2'-deoxyinosine. The chain is Purine nucleoside phosphorylase (punA) from Cellulomonas sp.